The primary structure comprises 139 residues: Putative pre-16S rRNA nuclease (139 aa).

This sequence belongs to the YqgF nuclease family.

It localises to the cytoplasm. Its function is as follows. Could be a nuclease involved in processing of the 5'-end of pre-16S rRNA. The protein is Putative pre-16S rRNA nuclease of Caldanaerobacter subterraneus subsp. tengcongensis (strain DSM 15242 / JCM 11007 / NBRC 100824 / MB4) (Thermoanaerobacter tengcongensis).